The following is a 338-amino-acid chain: Phosphoribosylformylglycinamidine cyclo-ligase (338 aa).

Belongs to the AIR synthase family.

Its subcellular location is the cytoplasm. It carries out the reaction 2-formamido-N(1)-(5-O-phospho-beta-D-ribosyl)acetamidine + ATP = 5-amino-1-(5-phospho-beta-D-ribosyl)imidazole + ADP + phosphate + H(+). Its pathway is purine metabolism; IMP biosynthesis via de novo pathway; 5-amino-1-(5-phospho-D-ribosyl)imidazole from N(2)-formyl-N(1)-(5-phospho-D-ribosyl)glycinamide: step 2/2. This is Phosphoribosylformylglycinamidine cyclo-ligase from Thermoplasma acidophilum (strain ATCC 25905 / DSM 1728 / JCM 9062 / NBRC 15155 / AMRC-C165).